An 855-amino-acid chain; its full sequence is Cytosolic phospholipase A2 zeta (855 aa).

One can recognise a C2 domain in the interval 27–145; it reads EKSEPQWKHR…QLGQPCTKNF (119 aa). Residues Asp60, Asp66, Asp116, Asp118, and Asp123 each contribute to the Ca(2+) site. The 552-residue stretch at 304–855 folds into the PLA2c domain; the sequence is MSSSGDLDLR…RRQAGGRVGG (552 aa). The Nucleophile role is filled by Ser393. Asp685 (proton acceptor) is an active-site residue.

Ca(2+) is required as a cofactor. As to expression, strongly expressed in thyroid, expressed at intermediate level in stomach and at very low level in large intestine and prostate.

It localises to the cytoplasm. The protein resides in the cytosol. Its subcellular location is the cell membrane. It is found in the mitochondrion. The catalysed reaction is a 1,2-diacyl-sn-glycero-3-phosphocholine + H2O = a 1-acyl-sn-glycero-3-phosphocholine + a fatty acid + H(+). It carries out the reaction a 1-O-alkyl-2-acyl-sn-glycero-3-phosphocholine + H2O = a 1-O-alkyl-sn-glycero-3-phosphocholine + a fatty acid + H(+). The enzyme catalyses 1-hexadecanoyl-2-(9Z-octadecenoyl)-sn-glycero-3-phosphocholine + H2O = 2-(9Z-octadecenoyl)-sn-glycero-3-phosphocholine + hexadecanoate + H(+). It catalyses the reaction 1-hexadecanoyl-2-(9Z,12Z-octadecadienoyl)-sn-glycero-3-phosphocholine + H2O = (9Z,12Z)-octadecadienoate + 1-hexadecanoyl-sn-glycero-3-phosphocholine + H(+). The catalysed reaction is 1-hexadecanoyl-2-(5Z,8Z,11Z,14Z-eicosatetraenoyl)-sn-glycero-3-phosphocholine + H2O = 1-hexadecanoyl-sn-glycero-3-phosphocholine + (5Z,8Z,11Z,14Z)-eicosatetraenoate + H(+). It carries out the reaction 1-hexadecanoyl-2-(9Z,12Z-octadecadienoyl)-sn-glycero-3-phosphoethanolamine + H2O = 1-hexadecanoyl-sn-glycero-3-phosphoethanolamine + (9Z,12Z)-octadecadienoate + H(+). The enzyme catalyses 1-hexadecanoyl-2-(5Z,8Z,11Z,14Z-eicosatetraenoyl)-sn-glycero-3-phosphoethanolamine + H2O = 1-hexadecanoyl-sn-glycero-3-phosphoethanolamine + (5Z,8Z,11Z,14Z)-eicosatetraenoate + H(+). It catalyses the reaction 1-(5Z,8Z,11Z,14Z-eicosatetraenoyl)-2-O-hexadecyl-sn-glycero-3-phosphocholine + H2O = 2-O-hexadecyl-sn-glycero-3-phosphocholine + (5Z,8Z,11Z,14Z)-eicosatetraenoate + H(+). The catalysed reaction is 1-O-hexadecyl-2-(5Z,8Z,11Z,14Z)-eicosatetraenoyl-sn-glycero-3-phosphocholine + H2O = 1-O-hexadecyl-sn-glycero-3-phosphocholine + (5Z,8Z,11Z,14Z)-eicosatetraenoate + H(+). It carries out the reaction 1-hexadecanoyl-sn-glycero-3-phosphocholine + H2O = sn-glycerol 3-phosphocholine + hexadecanoate + H(+). With respect to regulation, stimulated by cytosolic Ca(2+). In terms of biological role, has calcium-dependent phospholipase and lysophospholipase activities with a potential role in membrane lipid remodeling and biosynthesis of lipid mediators. Preferentially hydrolyzes the ester bond of the fatty acyl group attached at sn-2 position of phospholipids (phospholipase A2 activity). Selectively hydrolyzes sn-2 arachidonoyl group from membrane phospholipids, providing the precursor for eicosanoid biosynthesis. In myocardial mitochondria, plays a major role in arachidonate release that is metabolically channeled to the formation of cardioprotective eicosanoids, epoxyeicosatrienoates (EETs). This chain is Cytosolic phospholipase A2 zeta (Pla2g4f), found in Mus musculus (Mouse).